The following is a 440-amino-acid chain: Chromosome partition protein MukF (440 aa).

A leucine-zipper region spans residues Leu208 to Ile236.

It belongs to the MukF family. In terms of assembly, interacts, and probably forms a ternary complex, with MukE and MukB via its C-terminal region. The complex formation is stimulated by calcium or magnesium. It is required for an interaction between MukE and MukB.

It localises to the cytoplasm. The protein resides in the nucleoid. Its function is as follows. Involved in chromosome condensation, segregation and cell cycle progression. May participate in facilitating chromosome segregation by condensation DNA from both sides of a centrally located replisome during cell division. Not required for mini-F plasmid partitioning. Probably acts via its interaction with MukB and MukE. Overexpression results in anucleate cells. It has a calcium binding activity. This is Chromosome partition protein MukF from Klebsiella pneumoniae (strain 342).